Here is a 249-residue protein sequence, read N- to C-terminus: Neurotrophic factor BDNF precursor form (249 aa).

The N-terminal stretch at 1 to 18 (MTILFLTMVISYFGCMKA) is a signal peptide. Residues 19-130 (APMKEVNVHG…AANMSMRVRR (112 aa)) constitute a propeptide that is removed on maturation. N-linked (GlcNAc...) asparagine glycosylation is present at Asn-123. 3 disulfides stabilise this stretch: Cys-143/Cys-210, Cys-188/Cys-239, and Cys-198/Cys-241.

It belongs to the NGF-beta family. Monomers and homodimers. Binds to NTRK2/TRKB. Can form heterodimers with other neurotrophin family members, such as NTF3 and NTF4 (in vitro), but the physiological relevance of this is not clear. BDNF precursor form: interacts with the heterodimer formed by NGFR and SORCS2. Mature BDNF has much lower affinity for the heterodimer formed by NGFR and SORCS2. N-glycosylated and glycosulfated, contrary to mature BDNF. In terms of processing, mature BDNF is produced by proteolytic removal of the propeptide, catalyzed by a FURIN family member. In addition, the precursor form is proteolytically cleaved within the propeptide, but this is not an obligatory intermediate for the production of mature BDNF. Can be converted into mature BDNF by plasmin (PLG). In terms of tissue distribution, expressed in the dorsal root ganglion and the spinal cord (at protein level). Detected in brain, especially in brain cortex, hippocampus, midbrain and cerebellum.

It localises to the secreted. Functionally, important signaling molecule that activates signaling cascades downstream of NTRK2. During development, promotes the survival and differentiation of selected neuronal populations of the peripheral and central nervous systems. Participates in axonal growth, pathfinding and in the modulation of dendritic growth and morphology. Major regulator of synaptic transmission and plasticity at adult synapses in many regions of the CNS. The versatility of BDNF is emphasized by its contribution to a range of adaptive neuronal responses including long-term potentiation (LTP), long-term depression (LTD), certain forms of short-term synaptic plasticity, as well as homeostatic regulation of intrinsic neuronal excitability. Its function is as follows. Important signaling molecule that activates signaling cascades downstream of NTRK2. Activates signaling cascades via the heterodimeric receptor formed by NGFR and SORCS2. Signaling via NGFR and SORCS2 plays a role in synaptic plasticity and long-term depression (LTD). Binding to NGFR and SORCS2 promotes neuronal apoptosis. Promotes neuronal growth cone collapse. This chain is Neurotrophic factor BDNF precursor form (Bdnf), found in Mus musculus (Mouse).